Reading from the N-terminus, the 421-residue chain is FAD-dependent monooxygenase atnJ (421 aa).

A helical membrane pass occupies residues 9–29 (LVPLHVVIVGAGIGGLSAAVA). FAD contacts are provided by Glu-41 and Ala-54. Residue Arg-188 is part of the active site. The FAD site is built by Asp-303 and Val-316. The segment at 371–392 (RDGDAQAARDSQRKATSGTGQN) is disordered.

It belongs to the paxM FAD-dependent monooxygenase family. FAD is required as a cofactor.

Its subcellular location is the membrane. It functions in the pathway secondary metabolite biosynthesis; terpenoid biosynthesis. In terms of biological role, FAD-dependent monooxygenase; part of the gene cluster that mediates the biosynthesis of the meroterpenoids arthripenoids. The pathway begins with the HR-PKS atnH that catalyzes two chain-extension steps to form a reduced triketide, which then primes the SAT domain in the NR-PKS atnG to initiate three more cycles of extension to give a linear hexaketide corresponding to the polyketide part of arthripenoids. The FAD-dependent monooxygenase atnJ then performs an oxidative decarboxylation at C11 of the atnH/atnG product, via an electrophilic aromatic hydroxylation with concomitant ipso-decarboxylation. The membrane-bound polyprenyl transferase atnF then introduces a farnesyl group before the FAD-dependent monooxygenase atnK functions as the first epoxidase on terminal C12'-C13' olefin, followed by a second epoxidation on C7'-C8' catalyzed by atnA. The terpene cyclase/mutase atnI then initiates the sequential tricyclic ring formation through protonation of the terminal epoxide and catalyzes the regioselective and stereoselective 6/6/6-tricyclic ring formation. The cytochrome P450 monooxygenase atnM is responsible for hydroxylating both C1' and C10'. The next steps may involve ketoreduction and acetyl transfer by the ketoreductase atnB and the acetyltransferase atnC, and lead to the production of arthripenoid B, the final biosynthetic product of the atn cluster. The hydroquinone moiety in arthripenoid B is prone to undergo spontaneous oxidation to afford a benzoquinone compound, a key intermediate for generating structure diversity. For instance, addition of a cysteine followed by ring contraction gives arthripenoid A, tautomerization gives the main product arthripenoid C, addition of a molecular of water or amine affords arthripenoid D or E, respectively, and loss of one water forms arthripenoid F. The chain is FAD-dependent monooxygenase atnJ from Arthrinium sp.